A 360-amino-acid chain; its full sequence is Cyclin-dependent kinase 10 (360 aa).

One can recognise a Protein kinase domain in the interval 39 to 323 (FEKLNRIGEG…SGDCLESSYF (285 aa)). ATP contacts are provided by residues 45-53 (IGEGTYGIV) and Lys-68. The active-site Proton acceptor is Asp-163. At Thr-196 the chain carries Phosphothreonine. A disordered region spans residues 334-360 (LMPTFPHHRNKRAAPAAAEGQSKRCRP).

It belongs to the protein kinase superfamily. CMGC Ser/Thr protein kinase family. CDC2/CDKX subfamily. In terms of assembly, heterodimer with CCNQ, the interaction is required for kinase activity. Interacts with ETS2. Interacts with PRK2.

The protein localises to the cytoplasm. The protein resides in the cytoskeleton. Its subcellular location is the cilium basal body. The catalysed reaction is L-seryl-[protein] + ATP = O-phospho-L-seryl-[protein] + ADP + H(+). The enzyme catalyses L-threonyl-[protein] + ATP = O-phospho-L-threonyl-[protein] + ADP + H(+). In terms of biological role, cyclin-dependent kinase that phosphorylates the transcription factor ETS2 (in vitro) and positively controls its proteasomal degradation (in cells). Involved in the regulation of actin cytoskeleton organization through the phosphorylation of actin dynamics regulators such as PKN2. Is a negative regulator of ciliogenesis through phosphorylation of PKN2 and promotion of RhoA signaling. The polypeptide is Cyclin-dependent kinase 10 (Cdk10) (Mus musculus (Mouse)).